The chain runs to 397 residues: CCA-adding enzyme (397 aa).

Residues glycine 27 and arginine 30 each coordinate ATP. CTP-binding residues include glycine 27 and arginine 30. Residues aspartate 40 and aspartate 42 each contribute to the Mg(2+) site. Residues arginine 111, aspartate 154, arginine 157, arginine 160, and arginine 163 each coordinate ATP. CTP-binding residues include arginine 111, aspartate 154, arginine 157, arginine 160, and arginine 163.

Belongs to the tRNA nucleotidyltransferase/poly(A) polymerase family. Bacterial CCA-adding enzyme type 3 subfamily. In terms of assembly, homodimer. It depends on Mg(2+) as a cofactor.

The enzyme catalyses a tRNA precursor + 2 CTP + ATP = a tRNA with a 3' CCA end + 3 diphosphate. It carries out the reaction a tRNA with a 3' CCA end + 2 CTP + ATP = a tRNA with a 3' CCACCA end + 3 diphosphate. In terms of biological role, catalyzes the addition and repair of the essential 3'-terminal CCA sequence in tRNAs without using a nucleic acid template. Adds these three nucleotides in the order of C, C, and A to the tRNA nucleotide-73, using CTP and ATP as substrates and producing inorganic pyrophosphate. tRNA 3'-terminal CCA addition is required both for tRNA processing and repair. Also involved in tRNA surveillance by mediating tandem CCA addition to generate a CCACCA at the 3' terminus of unstable tRNAs. While stable tRNAs receive only 3'-terminal CCA, unstable tRNAs are marked with CCACCA and rapidly degraded. This is CCA-adding enzyme from Anoxybacillus flavithermus (strain DSM 21510 / WK1).